The following is a 153-amino-acid chain: 3-hydroxyacyl-[acyl-carrier-protein] dehydratase FabZ (153 aa).

Residue His57 is part of the active site.

The protein belongs to the thioester dehydratase family. FabZ subfamily.

It is found in the cytoplasm. The catalysed reaction is a (3R)-hydroxyacyl-[ACP] = a (2E)-enoyl-[ACP] + H2O. Involved in unsaturated fatty acids biosynthesis. Catalyzes the dehydration of short chain beta-hydroxyacyl-ACPs and long chain saturated and unsaturated beta-hydroxyacyl-ACPs. This Aeromonas hydrophila subsp. hydrophila (strain ATCC 7966 / DSM 30187 / BCRC 13018 / CCUG 14551 / JCM 1027 / KCTC 2358 / NCIMB 9240 / NCTC 8049) protein is 3-hydroxyacyl-[acyl-carrier-protein] dehydratase FabZ.